We begin with the raw amino-acid sequence, 89 residues long: Small ribosomal subunit protein uS15 (89 aa).

Belongs to the universal ribosomal protein uS15 family. In terms of assembly, part of the 30S ribosomal subunit. Forms a bridge to the 50S subunit in the 70S ribosome, contacting the 23S rRNA.

Its function is as follows. One of the primary rRNA binding proteins, it binds directly to 16S rRNA where it helps nucleate assembly of the platform of the 30S subunit by binding and bridging several RNA helices of the 16S rRNA. In terms of biological role, forms an intersubunit bridge (bridge B4) with the 23S rRNA of the 50S subunit in the ribosome. The polypeptide is Small ribosomal subunit protein uS15 (Actinobacillus pleuropneumoniae serotype 5b (strain L20)).